Consider the following 328-residue polypeptide: Phenylalanine--tRNA ligase alpha subunit (328 aa).

E253 is a Mg(2+) binding site.

It belongs to the class-II aminoacyl-tRNA synthetase family. Phe-tRNA synthetase alpha subunit type 1 subfamily. Tetramer of two alpha and two beta subunits. Mg(2+) serves as cofactor.

The protein resides in the cytoplasm. It carries out the reaction tRNA(Phe) + L-phenylalanine + ATP = L-phenylalanyl-tRNA(Phe) + AMP + diphosphate + H(+). The protein is Phenylalanine--tRNA ligase alpha subunit of Coxiella burnetii (strain Dugway 5J108-111).